Here is a 252-residue protein sequence, read N- to C-terminus: 2-succinyl-6-hydroxy-2,4-cyclohexadiene-1-carboxylate synthase (252 aa).

It belongs to the AB hydrolase superfamily. MenH family. Monomer.

The catalysed reaction is 5-enolpyruvoyl-6-hydroxy-2-succinyl-cyclohex-3-ene-1-carboxylate = (1R,6R)-6-hydroxy-2-succinyl-cyclohexa-2,4-diene-1-carboxylate + pyruvate. It participates in quinol/quinone metabolism; 1,4-dihydroxy-2-naphthoate biosynthesis; 1,4-dihydroxy-2-naphthoate from chorismate: step 3/7. Its pathway is quinol/quinone metabolism; menaquinone biosynthesis. In terms of biological role, catalyzes a proton abstraction reaction that results in 2,5-elimination of pyruvate from 2-succinyl-5-enolpyruvyl-6-hydroxy-3-cyclohexene-1-carboxylate (SEPHCHC) and the formation of 2-succinyl-6-hydroxy-2,4-cyclohexadiene-1-carboxylate (SHCHC). This is 2-succinyl-6-hydroxy-2,4-cyclohexadiene-1-carboxylate synthase from Klebsiella pneumoniae subsp. pneumoniae (strain ATCC 700721 / MGH 78578).